We begin with the raw amino-acid sequence, 200 residues long: Probable GTP-binding protein EngB (200 aa).

One can recognise an EngB-type G domain in the interval 26–200 (SIPEVALAGR…IYEIAQCIKK (175 aa)). GTP is bound by residues 34–41 (GRSNVGKS), 61–65 (GCTRQ), 80–83 (DLPG), 147–150 (TKID), and 179–181 (VSS). Residues Ser41 and Thr63 each coordinate Mg(2+).

The protein belongs to the TRAFAC class TrmE-Era-EngA-EngB-Septin-like GTPase superfamily. EngB GTPase family. Mg(2+) is required as a cofactor.

Functionally, necessary for normal cell division and for the maintenance of normal septation. This chain is Probable GTP-binding protein EngB, found in Ehrlichia ruminantium (strain Welgevonden).